The sequence spans 76 residues: MKNILFRINELSKKEKATGLTVDEKQEQQMLRQNYTQTFRGSLDSILLNTKIVDQNGLNVTPAALQDAQIRLKLSK.

This sequence belongs to the UPF0291 family.

It is found in the cytoplasm. This chain is UPF0291 protein BT9727_1737, found in Bacillus thuringiensis subsp. konkukian (strain 97-27).